The sequence spans 507 residues: ATP synthase subunit alpha, chloroplastic (507 aa).

Gly170 to Thr177 contacts ATP.

It belongs to the ATPase alpha/beta chains family. As to quaternary structure, F-type ATPases have 2 components, CF(1) - the catalytic core - and CF(0) - the membrane proton channel. CF(1) has five subunits: alpha(3), beta(3), gamma(1), delta(1), epsilon(1). CF(0) has four main subunits: a, b, b' and c.

The protein localises to the plastid. It localises to the chloroplast thylakoid membrane. The enzyme catalyses ATP + H2O + 4 H(+)(in) = ADP + phosphate + 5 H(+)(out). Produces ATP from ADP in the presence of a proton gradient across the membrane. The alpha chain is a regulatory subunit. The protein is ATP synthase subunit alpha, chloroplastic of Liriodendron tulipifera (Tuliptree).